We begin with the raw amino-acid sequence, 291 residues long: Taste receptor type 2 member 16 (291 aa).

Methionine 1 is a topological domain (extracellular). The helical transmembrane segment at 2 to 22 (IPIQLTVFFMIIYVLESLTII) threads the bilayer. Residues 23-41 (VQSSLIVAVLGREWLQVRR) lie on the Cytoplasmic side of the membrane. A helical membrane pass occupies residues 42–62 (LMPVDMILISLGISRFCLQWA). Topologically, residues 63–84 (SMLNBFCSYFNLNYVLCNLTIT) are extracellular. Residue asparagine 80 is glycosylated (N-linked (GlcNAc...) asparagine). The helical transmembrane segment at 85–105 (WEFFNILTFWLNSLLTVFYCI) threads the bilayer. Residues 106–125 (KVSSFTHHIFLWLRWRILRL) lie on the Cytoplasmic side of the membrane. A helical membrane pass occupies residues 126–146 (FPWILLGSLMITCVTIIPSAI). At 147 to 182 (GNYIQIQLLTMEHLPRNSTVTDKLEKFHQYEFQAHT) the chain is on the extracellular side. Asparagine 163 carries N-linked (GlcNAc...) asparagine glycosylation. Residues 183–203 (VALVIPFILFLASTILLMASL) traverse the membrane as a helical segment. At 204 to 228 (TKQIQHHSTGHCNPSMKAHFTALRS) the chain is on the cytoplasmic side. Residues 229-249 (LAVLFIVFTSYFLTILITIIG) traverse the membrane as a helical segment. The Extracellular segment spans residues 250-257 (TLFDRRCW). A helical membrane pass occupies residues 258–278 (LWVWEAFVYAFILMHSTSLML). Topologically, residues 279-291 (SSPTLKRILKGKC) are cytoplasmic.

Belongs to the G-protein coupled receptor T2R family. Interacts with RTP3 and RTP4.

The protein resides in the cell membrane. Receptor that may play a role in the perception of bitterness and is gustducin-linked. May play a role in sensing the chemical composition of the gastrointestinal content. The activity of this receptor may stimulate alpha gustducin, mediate PLC-beta-2 activation and lead to the gating of TRPM5. This Gorilla gorilla gorilla (Western lowland gorilla) protein is Taste receptor type 2 member 16 (TAS2R16).